A 510-amino-acid polypeptide reads, in one-letter code: Glycogen synthase (510 aa).

Lys18 lines the ADP-alpha-D-glucose pocket.

It belongs to the glycosyltransferase 1 family. Bacterial/plant glycogen synthase subfamily.

It catalyses the reaction [(1-&gt;4)-alpha-D-glucosyl](n) + ADP-alpha-D-glucose = [(1-&gt;4)-alpha-D-glucosyl](n+1) + ADP + H(+). It participates in glycan biosynthesis; glycogen biosynthesis. Its function is as follows. Synthesizes alpha-1,4-glucan chains using ADP-glucose. This chain is Glycogen synthase, found in Bordetella bronchiseptica (strain ATCC BAA-588 / NCTC 13252 / RB50) (Alcaligenes bronchisepticus).